The following is a 244-amino-acid chain: MRIIVVDNYEEMSKKAAAMVASQVILKPDSVLGLATGDTPIGMYKEIINIYKNQKMDFSKARTFNLDEYYGLNRENPQSYYYYMMNNLFNHVNIDKNNINIPNGMADNIEIECKEYERKIDKAGGIDLQILGIGVNGHIGFNEPNISFESETHLVNLNEKTIESNSRFFSSKEEVPTKAISVGIKSIIHSKKIILLACGSAKSDAVSKTINGKINPNIPASILQLHRDVVVIIDKEAASKLNLK.

Catalysis depends on Asp-67, which acts as the Proton acceptor; for enolization step. The For ring-opening step role is filled by Asn-136. The active-site Proton acceptor; for ring-opening step is the His-138. The active-site For ring-opening step is the Glu-143.

It belongs to the glucosamine/galactosamine-6-phosphate isomerase family. NagB subfamily.

The enzyme catalyses alpha-D-glucosamine 6-phosphate + H2O = beta-D-fructose 6-phosphate + NH4(+). The protein operates within amino-sugar metabolism; N-acetylneuraminate degradation; D-fructose 6-phosphate from N-acetylneuraminate: step 5/5. Its function is as follows. Catalyzes the reversible isomerization-deamination of glucosamine 6-phosphate (GlcN6P) to form fructose 6-phosphate (Fru6P) and ammonium ion. This Clostridium botulinum (strain ATCC 19397 / Type A) protein is Glucosamine-6-phosphate deaminase.